A 78-amino-acid chain; its full sequence is Translation initiation factor IF-1, chloroplastic (78 aa).

Positions 1–73 (MASNRELIEM…TKGRIIYRLR (73 aa)) constitute an S1-like domain.

This sequence belongs to the IF-1 family. As to quaternary structure, component of the 30S ribosomal translation pre-initiation complex which assembles on the 30S ribosome in the order IF-2 and IF-3, IF-1 and N-formylmethionyl-tRNA(fMet); mRNA recruitment can occur at any time during PIC assembly.

It localises to the plastid. The protein localises to the chloroplast. Its function is as follows. One of the essential components for the initiation of protein synthesis. Stabilizes the binding of IF-2 and IF-3 on the 30S subunit to which N-formylmethionyl-tRNA(fMet) subsequently binds. Helps modulate mRNA selection, yielding the 30S pre-initiation complex (PIC). Upon addition of the 50S ribosomal subunit IF-1, IF-2 and IF-3 are released leaving the mature 70S translation initiation complex. This chain is Translation initiation factor IF-1, chloroplastic, found in Ostreococcus tauri.